The primary structure comprises 490 residues: Transcription factor lin-26 (490 aa).

3 disordered regions span residues 96–176, 236–262, and 302–326; these read KYKD…PLHQ, TPEY…EPDS, and ASKP…KKHR. The PEST stretch occupies residues 101-110; that stretch reads SSSPESPSTT. Residues 101–120 are compositionally biased toward low complexity; sequence SSSPESPSTTASTAAQHTPP. Composition is skewed to polar residues over residues 123 to 132 and 151 to 176; these read AVSTPTSINT and NLST…PLHQ. Over residues 236–260 the composition is skewed to basic and acidic residues; it reads TPEYDDNHHSETISKASSEDLKTEP. Residues 353–381 form a C2H2-type; degenerate zinc finger; that stretch reads YKCALCGKPTTLNSTGSRWNLLRHVIMIH.

As to expression, expressed in somatic gonads and germline precursors until the 50-cell stage. After the 100-cell stage, expression is seen in differentiating hypodermal and support cells (at protein level).

The protein resides in the nucleus. In terms of biological role, probable transcription factor. Required to specify the fates of hypodermal and neuron-associated support cells. Functions during vulval development, playing a role in vulval precursor cell fate specification. Positively modulates expression of homeobox protein lin-39, perhaps by binding to regulatory regions of the lin-39 gene, acting in the vulval lineage. This is Transcription factor lin-26 from Caenorhabditis elegans.